A 318-amino-acid chain; its full sequence is Transaldolase (318 aa).

Lysine 132 serves as the catalytic Schiff-base intermediate with substrate.

Belongs to the transaldolase family. Type 1 subfamily. As to quaternary structure, homodimer.

The protein resides in the cytoplasm. It catalyses the reaction D-sedoheptulose 7-phosphate + D-glyceraldehyde 3-phosphate = D-erythrose 4-phosphate + beta-D-fructose 6-phosphate. The protein operates within carbohydrate degradation; pentose phosphate pathway; D-glyceraldehyde 3-phosphate and beta-D-fructose 6-phosphate from D-ribose 5-phosphate and D-xylulose 5-phosphate (non-oxidative stage): step 2/3. Its function is as follows. Transaldolase is important for the balance of metabolites in the pentose-phosphate pathway. The sequence is that of Transaldolase from Shewanella baltica (strain OS195).